The following is a 122-amino-acid chain: Large ribosomal subunit protein uL14 (122 aa).

This sequence belongs to the universal ribosomal protein uL14 family. As to quaternary structure, part of the 50S ribosomal subunit. Forms a cluster with proteins L3 and L19. In the 70S ribosome, L14 and L19 interact and together make contacts with the 16S rRNA in bridges B5 and B8.

Its function is as follows. Binds to 23S rRNA. Forms part of two intersubunit bridges in the 70S ribosome. The protein is Large ribosomal subunit protein uL14 of Parafrankia sp. (strain EAN1pec).